A 115-amino-acid chain; its full sequence is Rubredoxin (115 aa).

The Rubredoxin-like domain maps to S15–T66. Fe cation contacts are provided by C20, C23, C53, and C56.

Belongs to the rubredoxin family. Fe(3+) serves as cofactor.

Functionally, rubredoxin is a small nonheme, iron protein lacking acid-labile sulfide. Its single Fe, chelated to 4 Cys, functions as an electron acceptor and may also stabilize the conformation of the molecule. Could be involved in hydrogenase-linked redox processes. This Synechocystis sp. (strain ATCC 27184 / PCC 6803 / Kazusa) protein is Rubredoxin (rub).